The chain runs to 1663 residues: Cortactin-binding protein 2 (1663 aa).

Disordered stretches follow at residues 1–23 (MATD…AGAA), 203–222 (KKKT…RSTE), 367–440 (GASV…LHPG), 454–478 (GNAN…SPTS), and 498–614 (RFTS…LPPK). Residues 119–276 (KKMQERMSAQ…EQLKKGSDSK (158 aa)) adopt a coiled-coil conformation. Low complexity predominate over residues 386-396 (PSTGSTSDPTS). Residue arginine 498 is modified to Asymmetric dimethylarginine. The segment covering 583-593 (TVASTPSSLPQ) has biased composition (polar residues). ANK repeat units lie at residues 709–739 (GRPT…DINY), 743–772 (DGHS…QVNA), 776–805 (NGFT…NINH), 809–838 (GGQT…NRSV), 842–871 (DGWT…PAHG), and 912–942 (EGWT…EPER). The disordered stretch occupies residues 1448–1483 (KKGESGAWRKVNTSPRRKSGRFSLPTWNKPDLSTEG). The residue at position 1524 (serine 1524) is a Phosphoserine. The disordered stretch occupies residues 1560–1663 (DSSGNNPVLS…KNGHLEKPNK (104 aa)). Polar residues-rich tracts occupy residues 1561–1574 (SSGN…TINN) and 1582–1599 (KEVS…SNSK). Over residues 1624 to 1638 (SQNTKRSSSSSNTRQ) the composition is skewed to low complexity. Residues 1645-1663 (SKEENWNLHKNGHLEKPNK) show a composition bias toward basic and acidic residues.

Interacts with CTTN/cortactin SH3 domain. Interacts with STRN, STRN4/zinedin and MOB4/phocein; this interactions mediate the association with the STRIPAK core complex and may regulate dendritic spine distribution of the STRIPAK complex in hippocampal neurons. Activation of glutamate receptors weakens the interaction with STRN and STRN4.

The protein localises to the cytoplasm. It localises to the cell cortex. Its subcellular location is the cell projection. It is found in the dendritic spine. In terms of biological role, regulates the dendritic spine distribution of CTTN/cortactin in hippocampal neurons, and thus controls dendritic spinogenesis and dendritic spine maintenance. Associates with the striatin-interacting phosphatase and kinase (STRIPAK) core complex to regulate dendritic spine distribution of the STRIPAK complex in hippocampal neurons. This Gorilla gorilla gorilla (Western lowland gorilla) protein is Cortactin-binding protein 2 (CTTNBP2).